The chain runs to 202 residues: Translation initiation factor IF-3 (202 aa).

The interval 172-202 (KTRASARHPEVPGAGSVQDIDATGDTDGSPH) is disordered.

Belongs to the IF-3 family. Monomer.

The protein resides in the cytoplasm. In terms of biological role, IF-3 binds to the 30S ribosomal subunit and shifts the equilibrium between 70S ribosomes and their 50S and 30S subunits in favor of the free subunits, thus enhancing the availability of 30S subunits on which protein synthesis initiation begins. This Mycobacterium leprae (strain TN) protein is Translation initiation factor IF-3.